A 435-amino-acid polypeptide reads, in one-letter code: Transcription factor gkaF (435 aa).

A compositionally biased stretch (basic and acidic residues) spans 1–19 (MGRPQRGDTAKERRERQDK). Disordered regions lie at residues 1–40 (MGRPQRGDTAKERRERQDKVTSPPESGPISQSGLSDTVDW), 115–158 (STTA…SSQS), and 231–257 (FSSESASPHVNRPPIQQQQSPSRFLAP). The segment covering 28–40 (PISQSGLSDTVDW) has biased composition (polar residues). Low complexity predominate over residues 143–158 (SQSSDSSKPSSTSSQS).

It localises to the nucleus. Functionally, transcription factor; part of the gene cluster that mediates the biosynthesis of GKK1032, fungal natural products containing a macrocyclic para-cyclophane connected to a decahydrofluorene ring system that show potent antitumor activities. This Penicillium citrinum protein is Transcription factor gkaF.